Here is an 857-residue protein sequence, read N- to C-terminus: DNA mismatch repair protein MutS (857 aa).

608-615 (GPNMSGKS) is an ATP binding site.

It belongs to the DNA mismatch repair MutS family.

Its function is as follows. This protein is involved in the repair of mismatches in DNA. It is possible that it carries out the mismatch recognition step. This protein has a weak ATPase activity. The protein is DNA mismatch repair protein MutS of Lacticaseibacillus paracasei (strain ATCC 334 / BCRC 17002 / CCUG 31169 / CIP 107868 / KCTC 3260 / NRRL B-441) (Lactobacillus paracasei).